Consider the following 176-residue polypeptide: MGFPKEGEKVQIHSYKHNGSIHRMWKETTILKGTQSLVIGANDRTVVTESDGRTWITREPAICYFHENYWFNVIGMLREEGVYYYCNLSSPFAYDSEALKYIDYDLDIKVYPDMTYTLLDEDEYEKHSQIMQYPPVIDTILKRNVAQLTQWIHQRKGPFAPDFVDMWYERYLMYRN.

R23 acts as the Proton donor in catalysis. N87, D103, D105, D107, D120, and E123 together coordinate Mg(2+).

Belongs to the Ntdp family. Mg(2+) serves as cofactor.

It carries out the reaction a ribonucleoside 5'-triphosphate + H2O = a ribonucleoside 5'-diphosphate + phosphate + H(+). The enzyme catalyses a ribonucleoside 5'-diphosphate + H2O = a ribonucleoside 5'-phosphate + phosphate + H(+). Has nucleoside phosphatase activity towards nucleoside triphosphates and nucleoside diphosphates. This is Nucleoside triphosphate/diphosphate phosphatase from Bacillus anthracis (strain A0248).